Here is a 103-residue protein sequence, read N- to C-terminus: MKSLILLAILAALAVVTLCYESHESMESYELNPFINRRNANTFISPQQRWRAKVQERIRERSKPVHELNREACDDYRLCERYAMVYGYNAAYNRYFRKRRGTK.

A signal peptide spans 1–19; the sequence is MKSLILLAILAALAVVTLC. Glutamate 21 is modified (4-carboxyglutamate). Residues serine 22, serine 25, and serine 28 each carry the phosphoserine modification. Residues 51–97 form the Gla domain; sequence RAKVQERIRERSKPVHELNREACDDYRLCERYAMVYGYNAAYNRYFR. 4-carboxyglutamate is present on residues glutamate 56, glutamate 60, glutamate 67, and glutamate 71. A disulfide bridge links cysteine 73 with cysteine 79. The propeptide at 97–103 is removed in mature form; probably by carboxypeptidase N; it reads RKRRGTK.

The protein belongs to the osteocalcin/matrix Gla protein family. Requires vitamin K-dependent gamma-carboxylation for its function.

It localises to the secreted. Functionally, associates with the organic matrix of bone and cartilage. Thought to act as an inhibitor of bone formation. This Homo sapiens (Human) protein is Matrix Gla protein (MGP).